Consider the following 352-residue polypeptide: Mitochondrial ubiquitin ligase activator of NFKB 1 (352 aa).

Over 1 to 8 (MESGSRPS) the chain is Cytoplasmic. Residues 9–29 (LGQVILLGTSSMVTAVLYSIY) form a helical membrane-spanning segment. Topologically, residues 30 to 238 (RQKAQVAQEL…LLHRQESSVR (209 aa)) are mitochondrial intermembrane. A Glycyl lysine isopeptide (Lys-Gly) (interchain with G-Cter in ubiquitin) cross-link involves residue Lys-52. A helical transmembrane segment spans residues 239 to 259 (LWKILVLVFGFATCATLFFIL). Residues 260–352 (RKQYLHRQER…ITRVIPLYNS (93 aa)) are Cytoplasmic-facing. Lys-299 is covalently cross-linked (Glycyl lysine isopeptide (Lys-Gly) (interchain with G-Cter in ubiquitin)). The RING-type zinc finger occupies 302 to 340 (CVVCLSNFKSCVFLECGHVCSCRQCYLALPEPKRCPICR).

As to quaternary structure, homooligomer. Interacts with MAP3K7/TAK1. Interacts with UBC9. Interacts with and sumoylates DNM1L. Interacts with MAVS. Interacts with TP53 (via N-terminus); the interaction leads to ubiquitination and proteasomal degradation of TP53. Post-translationally, ubiquitinated by PRKN during mitophagy, leading to its degradation and enhancement of mitophagy. Deubiquitinated by USP30. In terms of tissue distribution, expressed in cortical neurons (at protein level).

The protein localises to the mitochondrion outer membrane. It is found in the peroxisome. It carries out the reaction S-ubiquitinyl-[E2 ubiquitin-conjugating enzyme]-L-cysteine + [acceptor protein]-L-lysine = [E2 ubiquitin-conjugating enzyme]-L-cysteine + N(6)-ubiquitinyl-[acceptor protein]-L-lysine.. The protein operates within protein modification; protein ubiquitination. It participates in protein modification; protein sumoylation. Its function is as follows. Exhibits weak E3 ubiquitin-protein ligase activity. E3 ubiquitin ligases accept ubiquitin from an E2 ubiquitin-conjugating enzyme in the form of a thioester and then directly transfer the ubiquitin to targeted substrates. Can ubiquitinate AKT1 preferentially at 'Lys-284' involving 'Lys-48'-linked polyubiquitination and seems to be involved in regulation of Akt signaling by targeting phosphorylated Akt to proteasomal degradation. Mediates polyubiquitination of cytoplasmic TP53 at 'Lys-27' which targets TP53 for proteasomal degradation, thus reducing TP53 levels in the cytoplasm and mitochondrion. Proposed to preferentially act as a SUMO E3 ligase at physiological concentrations. Plays a role in the control of mitochondrial morphology by promoting mitochondrial fragmentation, and influences mitochondrial localization. Likely to promote mitochondrial fission through negatively regulating the mitochondrial fusion proteins MFN1 and MFN2, acting in a pathway that is parallel to the PRKN/PINK1 regulatory pathway. May also be involved in the sumoylation of the membrane fission protein DNM1L. Inhibits cell growth. When overexpressed, activates JNK through MAP3K7/TAK1 and induces caspase-dependent apoptosis. Involved in the modulation of innate immune defense against viruses by inhibiting RIGI-dependent antiviral response. Can mediate RIGI sumoylation and disrupt its polyubiquitination. The polypeptide is Mitochondrial ubiquitin ligase activator of NFKB 1 (Mul1) (Mus musculus (Mouse)).